The sequence spans 214 residues: Cell division protein B1 (214 aa).

Part of a cell division machinery. In Sulfolobus acidocaldarius (strain ATCC 33909 / DSM 639 / JCM 8929 / NBRC 15157 / NCIMB 11770), this protein is Cell division protein B1.